The sequence spans 312 residues: Urease accessory protein UreD (312 aa).

The segment at 1-50 (MRPLAPDARCAPSRPGRGPWYARRPVTTPSDPPAALREPPPPARRAGKAG) is disordered.

The protein belongs to the UreD family. UreD, UreF and UreG form a complex that acts as a GTP-hydrolysis-dependent molecular chaperone, activating the urease apoprotein by helping to assemble the nickel containing metallocenter of UreC. The UreE protein probably delivers the nickel.

The protein localises to the cytoplasm. Required for maturation of urease via the functional incorporation of the urease nickel metallocenter. In Sorangium cellulosum (strain So ce56) (Polyangium cellulosum (strain So ce56)), this protein is Urease accessory protein UreD.